Consider the following 224-residue polypeptide: Homeobox protein Hox-B6 (224 aa).

The short motif at 127-132 (VYPWMQ) is the Antp-type hexapeptide element. Residues 146–205 (GRRGRQTYTRYQTLELEKEFHYNRYLTRRRRIEIAHALCLTERQIKIWFQNRRMKWKKES) constitute a DNA-binding region (homeobox). Ser214 is modified (phosphoserine).

Belongs to the Antp homeobox family.

The protein localises to the nucleus. Functionally, sequence-specific transcription factor which is part of a developmental regulatory system that provides cells with specific positional identities on the anterior-posterior axis. The sequence is that of Homeobox protein Hox-B6 (Hoxb6) from Mus musculus (Mouse).